Reading from the N-terminus, the 736-residue chain is 3',5'-cyclic-AMP phosphodiesterase 4B (736 aa).

2 disordered regions span residues 51–77 and 96–116; these read QLPP…PTTL and DVEN…SSSS. Position 56 is a phosphoserine (serine 56). At serine 290 the chain carries Phosphoserine. A PDEase domain is found at 330–659; that stretch reads VNTENEDHLA…NWYQSMIPQS (330 aa). The active-site Proton donor is the histidine 406. Histidine 406 is a binding site for 3',5'-cyclic AMP. AMP is bound by residues histidine 406 and histidine 410. Residues histidine 410, histidine 446, aspartate 447, and aspartate 564 each contribute to the Zn(2+) site. Positions 447, 564, 615, and 618 each coordinate AMP. Aspartate 447 provides a ligand contact to Mg(2+). Residue aspartate 447 coordinates Mn(2+). 3',5'-cyclic AMP is bound by residues glutamine 615 and phenylalanine 618. Residues serine 659 and serine 661 each carry the phosphoserine modification. Residues 685–736 form a disordered region; that stretch reads EEEDSEGPEKEGEGPNYFSSTKTLCVIDPENRDSLEETDIDIATEDKSLIDT.

The protein belongs to the cyclic nucleotide phosphodiesterase family. PDE4 subfamily. In terms of assembly, interacts with DISC1. It depends on Zn(2+) as a cofactor. Mg(2+) is required as a cofactor. The cofactor is Mn(2+). As to expression, widely expressed. Expressed in brain, heart, lung and liver. In terms of tissue distribution, expressed in liver and brain.

The protein localises to the cytoplasm. It localises to the cell membrane. It catalyses the reaction 3',5'-cyclic AMP + H2O = AMP + H(+). It participates in purine metabolism; 3',5'-cyclic AMP degradation; AMP from 3',5'-cyclic AMP: step 1/1. Its activity is regulated as follows. Inhibited by rolipram. Its function is as follows. Hydrolyzes the second messenger cAMP, which is a key regulator of many important physiological processes. The sequence is that of 3',5'-cyclic-AMP phosphodiesterase 4B from Rattus norvegicus (Rat).